The chain runs to 346 residues: L-threonine dehydratase catabolic TdcB (346 aa).

AMP is bound at residue 59–60 (FT). Lys64 bears the N6-(pyridoxal phosphate)lysine mark. AMP is bound by residues Gln94, 125–126 (GY), and Asn321.

This sequence belongs to the serine/threonine dehydratase family. In terms of assembly, in the native structure, TdcB is in a dimeric form, whereas in the TdcB-AMP complex, it exists in a tetrameric form (dimer of dimers). The cofactor is pyridoxal 5'-phosphate.

The catalysed reaction is L-threonine = 2-oxobutanoate + NH4(+). Its pathway is amino-acid degradation; L-threonine degradation via propanoate pathway; propanoate from L-threonine: step 1/4. Its activity is regulated as follows. Each protein molecule can bind up to four molecules of AMP, which act as an allosteric activator to the enzyme. Functionally, catalyzes the anaerobic formation of alpha-ketobutyrate and ammonia from threonine in a two-step reaction. The first step involved a dehydration of threonine and a production of enamine intermediates (aminocrotonate), which tautomerizes to its imine form (iminobutyrate). Both intermediates are unstable and short-lived. The second step is the nonenzymatic hydrolysis of the enamine/imine intermediates to form 2-ketobutyrate and free ammonia. In the low water environment of the cell, the second step is accelerated by RidA. The chain is L-threonine dehydratase catabolic TdcB (tdcB) from Staphylococcus aureus (strain bovine RF122 / ET3-1).